The following is a 150-amino-acid chain: Large ribosomal subunit protein bL9 (150 aa).

It belongs to the bacterial ribosomal protein bL9 family.

Binds to the 23S rRNA. The chain is Large ribosomal subunit protein bL9 from Leptothrix cholodnii (strain ATCC 51168 / LMG 8142 / SP-6) (Leptothrix discophora (strain SP-6)).